The following is a 541-amino-acid chain: MGNCFAKNHGLMKPQQNGNTTRSVEVGVTNQDPPSYTPQARTTQQPEKPGSVNSQPPPWRAAAAAPGLSPKTTTKSNSILENAFEDVKLFYTLGKELGRGQFGVTYLCTENSTGKKYACKSISKKKLVTKADKDDMRREIQIMQHLSGQPNIVEFKGAYEDEKAVNLVMELCAGGELFDRIIAKGHYTERAAASVCRQIVNVVKICHFMGVLHRDLKPENFLLSSKDEKALIKATDFGLSVFIEEGKVYRDIVGSAYYVAPEVLRRRYGKEVDIWSAGIILYILLSGVPPFWAETEKGIFDAILEGHIDFESQPWPSISSSAKDLVRRMLTADPKRRISAADVLQHPWLREGGEASDKPIDSAVLSRMKQFRAMNKLKKLALKVIAENIDTEEIQGLKAMFANIDTDNSGTITYEELKEGLAKLGSKLTEAEVKQLMDAADVDGNGSIDYIEFITATMHRHRLESNENLYKAFQHFDKDSSGYITIDELESALKEYGMGDDATIKEVLSDVDSDNDGRINYEEFCAMMRSGNPQQQQPRLF.

The interval 1–75 (MGNCFAKNHG…PGLSPKTTTK (75 aa)) is disordered. A lipid anchor (N-myristoyl glycine) is attached at Gly2. Over residues 14–54 (PQQNGNTTRSVEVGVTNQDPPSYTPQARTTQQPEKPGSVNS) the composition is skewed to polar residues. Position 69 is a phosphoserine (Ser69). In terms of domain architecture, Protein kinase spans 91-349 (YTLGKELGRG…AADVLQHPWL (259 aa)). Residues 97 to 105 (LGRGQFGVT) and Lys120 contribute to the ATP site. The Proton acceptor role is filled by Asp215. Ser255 is subject to Phosphoserine. The tract at residues 355 to 385 (ASDKPIDSAVLSRMKQFRAMNKLKKLALKVI) is autoinhibitory domain. EF-hand domains are found at residues 392 to 427 (EEIQ…LGSK), 428 to 463 (LTEA…RHRL), 464 to 499 (ESNE…YGMG), and 500 to 534 (DDAT…GNPQ). Positions 405, 407, 409, 411, 416, 441, 443, 445, 447, 452, 477, 479, 481, 483, 488, 512, 514, 516, 518, and 523 each coordinate Ca(2+).

Belongs to the protein kinase superfamily. Ser/Thr protein kinase family. CDPK subfamily.

The protein localises to the cell membrane. The enzyme catalyses L-seryl-[protein] + ATP = O-phospho-L-seryl-[protein] + ADP + H(+). The catalysed reaction is L-threonyl-[protein] + ATP = O-phospho-L-threonyl-[protein] + ADP + H(+). With respect to regulation, activated by calcium. Autophosphorylation may play an important role in the regulation of the kinase activity. Its function is as follows. May play a role in signal transduction pathways that involve calcium as a second messenger. This Arabidopsis thaliana (Mouse-ear cress) protein is Calcium-dependent protein kinase 9 (CPK9).